The chain runs to 220 residues: Ribonuclease HII (220 aa).

The RNase H type-2 domain occupies 27-220; it reads CIIVGVDEVG…SKISYMFKNS (194 aa). Residues Asp33, Glu34, and Asp128 each contribute to the a divalent metal cation site.

It belongs to the RNase HII family. It depends on Mn(2+) as a cofactor. Mg(2+) serves as cofactor.

It is found in the cytoplasm. The enzyme catalyses Endonucleolytic cleavage to 5'-phosphomonoester.. Its function is as follows. Endonuclease that specifically degrades the RNA of RNA-DNA hybrids. The sequence is that of Ribonuclease HII from Ehrlichia ruminantium (strain Gardel).